Consider the following 404-residue polypeptide: Multidrug resistance protein MdtG (404 aa).

The next 11 helical transmembrane spans lie at Leu19–Val39, Leu56–Ala76, Leu90–Ile110, Ala113–Ala133, Thr144–Ala164, Pro171–Ile191, Leu222–Leu242, Ile254–Pro274, Ile288–Thr308, Phe317–Asn337, and Ala376–Leu396.

This sequence belongs to the major facilitator superfamily. DHA1 family. MdtG (TC 2.A.1.2.20) subfamily.

It localises to the cell inner membrane. The polypeptide is Multidrug resistance protein MdtG (Salmonella paratyphi A (strain ATCC 9150 / SARB42)).